A 61-amino-acid polypeptide reads, in one-letter code: Probable tautomerase LMOf2365_2536 (61 aa).

The Proton acceptor; via imino nitrogen role is filled by Pro2.

The protein belongs to the 4-oxalocrotonate tautomerase family.

In Listeria monocytogenes serotype 4b (strain F2365), this protein is Probable tautomerase LMOf2365_2536.